Reading from the N-terminus, the 144-residue chain is Large ribosomal subunit protein uL15 (144 aa).

The tract at residues 1-51 is disordered; it reads MRLNTLSPAEGAKHSAKRLGRGIGSGLGKTGGRGHKGQKSRTGGKVRRGFE. Residues 21–31 show a composition bias toward gly residues; it reads RGIGSGLGKTG. Positions 32-47 are enriched in basic residues; sequence GRGHKGQKSRTGGKVR.

The protein belongs to the universal ribosomal protein uL15 family. As to quaternary structure, part of the 50S ribosomal subunit.

In terms of biological role, binds to the 23S rRNA. The protein is Large ribosomal subunit protein uL15 of Actinobacillus succinogenes (strain ATCC 55618 / DSM 22257 / CCUG 43843 / 130Z).